A 119-amino-acid chain; its full sequence is MORF4 family associated protein 1 like 2 (119 aa).

A compositionally biased stretch (basic and acidic residues) spans 1–16; that stretch reads MRPVDADEAREPREEP. Positions 1–36 are disordered; the sequence is MRPVDADEAREPREEPGSPLSPAPRAGRENLASLER.

Belongs to the MORF4 family-associated protein family. As to quaternary structure, may interact with CDK2AP1.

In terms of biological role, may play a role in cell proliferation. The polypeptide is MORF4 family associated protein 1 like 2 (Homo sapiens (Human)).